Consider the following 245-residue polypeptide: Orotidine 5'-phosphate decarboxylase (245 aa).

Substrate contacts are provided by residues D22, K44, 71–80, T131, R192, Q201, G221, and R222; that span reads DLKFHDIPNT. The Proton donor role is filled by K73.

The protein belongs to the OMP decarboxylase family. Type 1 subfamily. As to quaternary structure, homodimer.

The enzyme catalyses orotidine 5'-phosphate + H(+) = UMP + CO2. Its pathway is pyrimidine metabolism; UMP biosynthesis via de novo pathway; UMP from orotate: step 2/2. Catalyzes the decarboxylation of orotidine 5'-monophosphate (OMP) to uridine 5'-monophosphate (UMP). The sequence is that of Orotidine 5'-phosphate decarboxylase from Escherichia coli (strain 55989 / EAEC).